Consider the following 374-residue polypeptide: Methionine import ATP-binding protein MetN 2 (374 aa).

The 240-residue stretch at 32–271 (VRFVGLGKTY…PQHEVSQTLL (240 aa)) folds into the ABC transporter domain. An ATP-binding site is contributed by 68–75 (GRSGAGKS).

The protein belongs to the ABC transporter superfamily. Methionine importer (TC 3.A.1.24) family. As to quaternary structure, the complex is composed of two ATP-binding proteins (MetN), two transmembrane proteins (MetI) and a solute-binding protein (MetQ).

The protein localises to the cell inner membrane. The catalysed reaction is L-methionine(out) + ATP + H2O = L-methionine(in) + ADP + phosphate + H(+). It carries out the reaction D-methionine(out) + ATP + H2O = D-methionine(in) + ADP + phosphate + H(+). In terms of biological role, part of the ABC transporter complex MetNIQ involved in methionine import. Responsible for energy coupling to the transport system. The polypeptide is Methionine import ATP-binding protein MetN 2 (Pseudomonas fluorescens (strain Pf0-1)).